Reading from the N-terminus, the 117-residue chain is Large ribosomal subunit protein uL18 (117 aa).

It belongs to the universal ribosomal protein uL18 family. As to quaternary structure, part of the 50S ribosomal subunit; part of the 5S rRNA/L5/L18/L25 subcomplex. Contacts the 5S and 23S rRNAs.

This is one of the proteins that bind and probably mediate the attachment of the 5S RNA into the large ribosomal subunit, where it forms part of the central protuberance. The protein is Large ribosomal subunit protein uL18 of Francisella tularensis subsp. novicida (strain U112).